We begin with the raw amino-acid sequence, 308 residues long: uncharacterized protein (308 aa).

Residues glutamate 212–histidine 242 are a coiled coil.

This is an uncharacterized protein from Ostreid herpesvirus 1 (isolate France) (OsHV-1).